A 122-amino-acid polypeptide reads, in one-letter code: Large ribosomal subunit protein uL14 (122 aa).

It belongs to the universal ribosomal protein uL14 family. In terms of assembly, part of the 50S ribosomal subunit. Forms a cluster with proteins L3 and L19. In the 70S ribosome, L14 and L19 interact and together make contacts with the 16S rRNA in bridges B5 and B8.

Binds to 23S rRNA. Forms part of two intersubunit bridges in the 70S ribosome. The chain is Large ribosomal subunit protein uL14 from Chlamydia muridarum (strain MoPn / Nigg).